Consider the following 207-residue polypeptide: dTTP/UTP pyrophosphatase (207 aa).

Asp-87 acts as the Proton acceptor in catalysis.

Belongs to the Maf family. YhdE subfamily. The cofactor is a divalent metal cation.

The protein resides in the cytoplasm. The enzyme catalyses dTTP + H2O = dTMP + diphosphate + H(+). It carries out the reaction UTP + H2O = UMP + diphosphate + H(+). In terms of biological role, nucleoside triphosphate pyrophosphatase that hydrolyzes dTTP and UTP. May have a dual role in cell division arrest and in preventing the incorporation of modified nucleotides into cellular nucleic acids. This is dTTP/UTP pyrophosphatase from Nitrosomonas europaea (strain ATCC 19718 / CIP 103999 / KCTC 2705 / NBRC 14298).